Consider the following 291-residue polypeptide: ATP synthase gamma chain (291 aa).

It belongs to the ATPase gamma chain family. F-type ATPases have 2 components, CF(1) - the catalytic core - and CF(0) - the membrane proton channel. CF(1) has five subunits: alpha(3), beta(3), gamma(1), delta(1), epsilon(1). CF(0) has three main subunits: a, b and c.

It is found in the cell inner membrane. Functionally, produces ATP from ADP in the presence of a proton gradient across the membrane. The gamma chain is believed to be important in regulating ATPase activity and the flow of protons through the CF(0) complex. The polypeptide is ATP synthase gamma chain (Burkholderia cenocepacia (strain ATCC BAA-245 / DSM 16553 / LMG 16656 / NCTC 13227 / J2315 / CF5610) (Burkholderia cepacia (strain J2315))).